The sequence spans 647 residues: Acetyl-coenzyme A synthetase (647 aa).

Residues 190–193 (RGGK), T310, and N334 contribute to the CoA site. ATP-binding positions include 386 to 388 (GEP), 410 to 415 (DTWWQT), D499, and R514. S522 serves as a coordination point for CoA. R525 is a binding site for ATP. V536, H538, and V541 together coordinate Mg(2+). Position 583 (R583) interacts with CoA. The residue at position 608 (K608) is an N6-acetyllysine.

It belongs to the ATP-dependent AMP-binding enzyme family. Requires Mg(2+) as cofactor. Post-translationally, acetylated. Deacetylation by the SIR2-homolog deacetylase activates the enzyme.

It catalyses the reaction acetate + ATP + CoA = acetyl-CoA + AMP + diphosphate. In terms of biological role, catalyzes the conversion of acetate into acetyl-CoA (AcCoA), an essential intermediate at the junction of anabolic and catabolic pathways. AcsA undergoes a two-step reaction. In the first half reaction, AcsA combines acetate with ATP to form acetyl-adenylate (AcAMP) intermediate. In the second half reaction, it can then transfer the acetyl group from AcAMP to the sulfhydryl group of CoA, forming the product AcCoA. In Xanthomonas axonopodis pv. citri (strain 306), this protein is Acetyl-coenzyme A synthetase.